Here is a 155-residue protein sequence, read N- to C-terminus: Ribonuclease H (155 aa).

One can recognise an RNase H type-1 domain in the interval 4-145; sequence ETKVIEIYTD…ADALARKAIT (142 aa). Residues aspartate 13, glutamate 51, aspartate 73, and aspartate 137 each coordinate Mg(2+).

This sequence belongs to the RNase H family. Monomer. It depends on Mg(2+) as a cofactor.

The protein localises to the cytoplasm. The enzyme catalyses Endonucleolytic cleavage to 5'-phosphomonoester.. Its function is as follows. Endonuclease that specifically degrades the RNA of RNA-DNA hybrids. In Bartonella bacilliformis (strain ATCC 35685 / KC583 / Herrer 020/F12,63), this protein is Ribonuclease H.